Consider the following 110-residue polypeptide: Nucleoid-associated protein Tola_2216 (110 aa).

The protein belongs to the YbaB/EbfC family. As to quaternary structure, homodimer.

It localises to the cytoplasm. Its subcellular location is the nucleoid. Its function is as follows. Binds to DNA and alters its conformation. May be involved in regulation of gene expression, nucleoid organization and DNA protection. This Tolumonas auensis (strain DSM 9187 / NBRC 110442 / TA 4) protein is Nucleoid-associated protein Tola_2216.